Here is a 122-residue protein sequence, read N- to C-terminus: Protein FAM223B (122 aa).

It belongs to the FAM223 family.

The sequence is that of Protein FAM223B (FAM223B) from Homo sapiens (Human).